Here is a 188-residue protein sequence, read N- to C-terminus: CyanoP (188 aa).

Residues 1 to 23 (MLKKSLSTAVVLVTLLLSFTLTA) form the signal peptide. C24 carries the N-palmitoyl cysteine lipid modification. C24 carries S-diacylglycerol cysteine lipidation.

This sequence belongs to the PsbP family. CyanoP subfamily. Monomer. Present in about 3% of photosystem II (PSII) preparations. Purifies with partially assembled PSII complexes, in addition to a small amount of monomeric and dimeric PSII, and trimeric PSI.

It localises to the cellular thylakoid membrane. Plays a role in the early stages of photosystem II (PSII) assembly; binds to D2 (psbD) and may facilitate its incorporation into PSII. Required for optimal photoautotrophic growth in the absence of Ca(2+) or Cl(-), functions in optimizing PSII water oxidation/O(2) evolving activity. Might be involved in assembly of the oxygen evolving complex. The polypeptide is CyanoP (Synechocystis sp. (strain ATCC 27184 / PCC 6803 / Kazusa)).